We begin with the raw amino-acid sequence, 482 residues long: tRNA sulfurtransferase (482 aa).

Residues 61-165 form the THUMP domain; sequence LAIRDALTRI…DDRLLLIKGR (105 aa). Residues 183–184, K265, G287, and Q296 each bind ATP; that span reads LI. C344 and C456 form a disulfide bridge. In terms of domain architecture, Rhodanese spans 404–482; the sequence is FGANDVILDI…GFANVKVYRP (79 aa). The active-site Cysteine persulfide intermediate is the C456.

The protein belongs to the ThiI family.

It is found in the cytoplasm. The enzyme catalyses [ThiI sulfur-carrier protein]-S-sulfanyl-L-cysteine + a uridine in tRNA + 2 reduced [2Fe-2S]-[ferredoxin] + ATP + H(+) = [ThiI sulfur-carrier protein]-L-cysteine + a 4-thiouridine in tRNA + 2 oxidized [2Fe-2S]-[ferredoxin] + AMP + diphosphate. It carries out the reaction [ThiS sulfur-carrier protein]-C-terminal Gly-Gly-AMP + S-sulfanyl-L-cysteinyl-[cysteine desulfurase] + AH2 = [ThiS sulfur-carrier protein]-C-terminal-Gly-aminoethanethioate + L-cysteinyl-[cysteine desulfurase] + A + AMP + 2 H(+). The protein operates within cofactor biosynthesis; thiamine diphosphate biosynthesis. In terms of biological role, catalyzes the ATP-dependent transfer of a sulfur to tRNA to produce 4-thiouridine in position 8 of tRNAs, which functions as a near-UV photosensor. Also catalyzes the transfer of sulfur to the sulfur carrier protein ThiS, forming ThiS-thiocarboxylate. This is a step in the synthesis of thiazole, in the thiamine biosynthesis pathway. The sulfur is donated as persulfide by IscS. This Salmonella paratyphi B (strain ATCC BAA-1250 / SPB7) protein is tRNA sulfurtransferase.